A 300-amino-acid polypeptide reads, in one-letter code: Ribosomal protein L11 methyltransferase (300 aa).

Residues Thr-152, Gly-173, Asp-195, and Asn-234 each coordinate S-adenosyl-L-methionine.

It belongs to the methyltransferase superfamily. PrmA family.

Its subcellular location is the cytoplasm. It carries out the reaction L-lysyl-[protein] + 3 S-adenosyl-L-methionine = N(6),N(6),N(6)-trimethyl-L-lysyl-[protein] + 3 S-adenosyl-L-homocysteine + 3 H(+). Its function is as follows. Methylates ribosomal protein L11. The sequence is that of Ribosomal protein L11 methyltransferase from Cupriavidus necator (strain ATCC 17699 / DSM 428 / KCTC 22496 / NCIMB 10442 / H16 / Stanier 337) (Ralstonia eutropha).